The following is a 658-amino-acid chain: Exoribonuclease 2 (658 aa).

Positions 189-530 constitute an RNB domain; sequence REDLTSLYFT…VNHRLIKQVL (342 aa). Residues 576 to 658 enclose the S1 motif domain; that stretch reads AVEFDCEIAD…ETRSIVGNII (83 aa).

This sequence belongs to the RNR ribonuclease family. RNase II subfamily.

The protein localises to the cytoplasm. It catalyses the reaction Exonucleolytic cleavage in the 3'- to 5'-direction to yield nucleoside 5'-phosphates.. In terms of biological role, involved in mRNA degradation. Hydrolyzes single-stranded polyribonucleotides processively in the 3' to 5' direction. In Actinobacillus pleuropneumoniae serotype 3 (strain JL03), this protein is Exoribonuclease 2.